We begin with the raw amino-acid sequence, 64 residues long: Beta-defensin 1 (64 aa).

Positions 1–20 (MRLHRLLLVFLLMVLLPVPG) are cleaved as a signal peptide. Residues 21-23 (LLK) constitute a propeptide that is removed on maturation. 3 cysteine pairs are disulfide-bonded: Cys-31–Cys-60, Cys-38–Cys-53, and Cys-43–Cys-61.

This sequence belongs to the beta-defensin family. In terms of assembly, monomer. Homodimer.

It localises to the secreted. The protein resides in the membrane. Its function is as follows. Has bactericidal activity. May act as a ligand for C-C chemokine receptor CCR6. Positively regulates the sperm motility and bactericidal activity in a CCR6-dependent manner. Binds to CCR6 and triggers Ca2+ mobilization in the sperm which is important for its motility. The chain is Beta-defensin 1 (DEFB1) from Sus scrofa (Pig).